The chain runs to 137 residues: UPF0146 protein MJ0688 (137 aa).

The protein belongs to the UPF0146 family.

The polypeptide is UPF0146 protein MJ0688 (Methanocaldococcus jannaschii (strain ATCC 43067 / DSM 2661 / JAL-1 / JCM 10045 / NBRC 100440) (Methanococcus jannaschii)).